A 48-amino-acid chain; its full sequence is DNA-directed RNA polymerase subunit Rpo12 (48 aa).

The Zn(2+) site is built by Cys-6, Cys-9, Cys-26, and Cys-29.

This sequence belongs to the archaeal Rpo12/eukaryotic RPC10 RNA polymerase subunit family. Part of the 13-subunit RNA polymerase. It depends on Zn(2+) as a cofactor.

The protein localises to the cytoplasm. The catalysed reaction is RNA(n) + a ribonucleoside 5'-triphosphate = RNA(n+1) + diphosphate. Its function is as follows. DNA-dependent RNA polymerase (RNAP) catalyzes the transcription of DNA into RNA using the four ribonucleoside triphosphates as substrates. The sequence is that of DNA-directed RNA polymerase subunit Rpo12 from Sulfolobus acidocaldarius (strain ATCC 33909 / DSM 639 / JCM 8929 / NBRC 15157 / NCIMB 11770).